The sequence spans 511 residues: Chromosomal replication initiator protein DnaA (511 aa).

Residues 1–90 are domain I, interacts with DnaA modulators; that stretch reads MSVELWQQCV…KRSSAPRAAP (90 aa). Residues 91–174 form a domain II region; it reads NAPLAAAASQ…QVEGALKHTS (84 aa). Positions 133–162 are disordered; the sequence is VAAHDEPSRDSFDPMAGASSQQAPARAEQR. Positions 135-144 are enriched in basic and acidic residues; it reads AHDEPSRDSF. The tract at residues 175 to 391 is domain III, AAA+ region; it reads YLNRTFTFEN…GALKRVIAHS (217 aa). ATP is bound by residues Gly-219, Gly-221, Lys-222, and Thr-223. The domain IV, binds dsDNA stretch occupies residues 392–511; it reads HFMGRDITIE…YKNLLRTLTT (120 aa).

It belongs to the DnaA family. In terms of assembly, oligomerizes as a right-handed, spiral filament on DNA at oriC.

It localises to the cytoplasm. Plays an essential role in the initiation and regulation of chromosomal replication. ATP-DnaA binds to the origin of replication (oriC) to initiate formation of the DNA replication initiation complex once per cell cycle. Binds the DnaA box (a 9 base pair repeat at the origin) and separates the double-stranded (ds)DNA. Forms a right-handed helical filament on oriC DNA; dsDNA binds to the exterior of the filament while single-stranded (ss)DNA is stabiized in the filament's interior. The ATP-DnaA-oriC complex binds and stabilizes one strand of the AT-rich DNA unwinding element (DUE), permitting loading of DNA polymerase. After initiation quickly degrades to an ADP-DnaA complex that is not apt for DNA replication. Binds acidic phospholipids. In Pseudomonas savastanoi pv. phaseolicola (strain 1448A / Race 6) (Pseudomonas syringae pv. phaseolicola (strain 1448A / Race 6)), this protein is Chromosomal replication initiator protein DnaA.